The chain runs to 462 residues: Cysteine--tRNA ligase (462 aa).

Position 28 (Cys-28) interacts with Zn(2+). The short motif at Val-30–His-40 is the 'HIGH' region element. Zn(2+)-binding residues include Cys-211, His-236, and Glu-240. Residues Lys-268–Ser-272 carry the 'KMSKS' region motif. Residue Lys-271 participates in ATP binding.

Belongs to the class-I aminoacyl-tRNA synthetase family. As to quaternary structure, monomer. The cofactor is Zn(2+).

The protein resides in the cytoplasm. It carries out the reaction tRNA(Cys) + L-cysteine + ATP = L-cysteinyl-tRNA(Cys) + AMP + diphosphate. The protein is Cysteine--tRNA ligase of Aliivibrio salmonicida (strain LFI1238) (Vibrio salmonicida (strain LFI1238)).